We begin with the raw amino-acid sequence, 129 residues long: Histone H2A.J (129 aa).

The segment at Met-1 to Ala-22 is disordered. N6-acetyllysine is present on residues Lys-6 and Lys-10. A compositionally biased stretch (basic residues) spans Gln-7–Ser-19. Position 10 is an N6-lactoyllysine; alternate (Lys-10). Position 105 is an N5-methylglutamine (Gln-105). Thr-121 carries the post-translational modification Phosphothreonine; by DCAF1.

The protein belongs to the histone H2A family. In terms of assembly, the nucleosome is a histone octamer containing two molecules each of H2A, H2B, H3 and H4 assembled in one H3-H4 heterotetramer and two H2A-H2B heterodimers. The octamer wraps approximately 147 bp of DNA. Monoubiquitination of Lys-120 (H2AXK119ub) gives a specific tag for epigenetic transcriptional repression. Following DNA double-strand breaks (DSBs), it is ubiquitinated through 'Lys-63' linkage of ubiquitin moieties. In terms of processing, glutamine methylation at Gln-105 (H2AQ104me) by FBL is specifically dedicated to polymerase I. It is present at 35S ribosomal DNA locus and impairs binding of the FACT complex. Post-translationally, phosphorylation on Ser-2 (H2AS1ph) is enhanced during mitosis. Phosphorylation on Ser-2 by RPS6KA5/MSK1 directly represses transcription. Acetylation of H3 inhibits Ser-2 phosphorylation by RPS6KA5/MSK1. Phosphorylation at Thr-121 (H2AT120ph) by DCAF1 is present in the regulatory region of many tumor suppresor genes and down-regulates their transcription.

The protein localises to the nucleus. It is found in the chromosome. Functionally, core component of nucleosome. Nucleosomes wrap and compact DNA into chromatin, limiting DNA accessibility to the cellular machineries which require DNA as a template. Histones thereby play a central role in transcription regulation, DNA repair, DNA replication and chromosomal stability. DNA accessibility is regulated via a complex set of post-translational modifications of histones, also called histone code, and nucleosome remodeling. This is Histone H2A.J from Macaca fascicularis (Crab-eating macaque).